The sequence spans 362 residues: Porin Omp2b (362 aa).

An N-terminal signal peptide occupies residues 1–22 (MNIKSLLLGSAAALVAASGAQA).

It belongs to the alphaproteobacteria porin family. As to quaternary structure, homotrimer.

The protein localises to the cell outer membrane. Functionally, forms passive diffusion pores that allow small molecular weight hydrophilic materials across the outer membrane. The chain is Porin Omp2b (omp2b) from Brucella abortus (strain S19).